The chain runs to 233 residues: 2-C-methyl-D-erythritol 4-phosphate cytidylyltransferase (233 aa).

It belongs to the IspD/TarI cytidylyltransferase family. IspD subfamily.

It carries out the reaction 2-C-methyl-D-erythritol 4-phosphate + CTP + H(+) = 4-CDP-2-C-methyl-D-erythritol + diphosphate. Its pathway is isoprenoid biosynthesis; isopentenyl diphosphate biosynthesis via DXP pathway; isopentenyl diphosphate from 1-deoxy-D-xylulose 5-phosphate: step 2/6. Functionally, catalyzes the formation of 4-diphosphocytidyl-2-C-methyl-D-erythritol from CTP and 2-C-methyl-D-erythritol 4-phosphate (MEP). The polypeptide is 2-C-methyl-D-erythritol 4-phosphate cytidylyltransferase (Syntrophotalea carbinolica (strain DSM 2380 / NBRC 103641 / GraBd1) (Pelobacter carbinolicus)).